We begin with the raw amino-acid sequence, 60 residues long: Chromatin protein Cren7 (60 aa).

It belongs to the Cren7 family. In terms of assembly, monomer. Methylated at multiple sites, to varying extents.

Its subcellular location is the chromosome. It is found in the cytoplasm. Functionally, a chromatin protein, binds double-stranded DNA without sequence specificity. Constrains negative DNA supercoils. In Saccharolobus islandicus (strain M.16.4 / Kamchatka #3) (Sulfolobus islandicus), this protein is Chromatin protein Cren7.